Reading from the N-terminus, the 92-residue chain is MNDQTPDRYVTFMGIACDTNADRLCEMLAARMAGNDSRWVAYFEKKLAENAQMGHDRLRFIGAQVNALMSFFEEEDDEAALALLWHIEHHCL.

It belongs to the CowN family.

In terms of biological role, is required to sustain N(2)-dependent growth in the presence of low levels of carbon monoxide (CO). Probably acts by protecting the N(2) fixation ability of the nitrogenase complex, which is inactivated in the presence of CO. This is N(2)-fixation sustaining protein CowN from Rhodobacter capsulatus (strain ATCC BAA-309 / NBRC 16581 / SB1003).